The primary structure comprises 1072 residues: Carbamoyl phosphate synthase large chain (1072 aa).

The carboxyphosphate synthetic domain stretch occupies residues 1-401 (MPKRLDINTI…SLLKAVRSLE (401 aa)). Residues R129, R169, G175, G176, K208, I210, E215, G241, V242, H243, Q284, and E298 each contribute to the ATP site. Residues 133-327 (RTLMQDLNEP…IAKLAAKIAV (195 aa)) form the ATP-grasp 1 domain. 3 residues coordinate Mg(2+): Q284, E298, and N300. The Mn(2+) site is built by Q284, E298, and N300. Positions 402 to 546 (LGIYHLELDH…YSTYADENES (145 aa)) are oligomerization domain. The tract at residues 547–929 (IVTDRKSVVV…ALYKGLVASG (383 aa)) is carbamoyl phosphate synthetic domain. Positions 671–861 (EAALTKLGIP…MANVATKVIL (191 aa)) constitute an ATP-grasp 2 domain. ATP is bound by residues R707, R746, E752, G777, V778, H779, S780, Q820, and E832. Q820, E832, and N834 together coordinate Mg(2+). Q820, E832, and N834 together coordinate Mn(2+). The MGS-like domain occupies 930-1072 (INIPTHGSVI…QTKRHEVVHA (143 aa)). The tract at residues 930-1072 (INIPTHGSVI…QTKRHEVVHA (143 aa)) is allosteric domain.

This sequence belongs to the CarB family. As to quaternary structure, composed of two chains; the small (or glutamine) chain promotes the hydrolysis of glutamine to ammonia, which is used by the large (or ammonia) chain to synthesize carbamoyl phosphate. Tetramer of heterodimers (alpha,beta)4. Mg(2+) is required as a cofactor. The cofactor is Mn(2+).

It catalyses the reaction hydrogencarbonate + L-glutamine + 2 ATP + H2O = carbamoyl phosphate + L-glutamate + 2 ADP + phosphate + 2 H(+). The catalysed reaction is hydrogencarbonate + NH4(+) + 2 ATP = carbamoyl phosphate + 2 ADP + phosphate + 2 H(+). It functions in the pathway amino-acid biosynthesis; L-arginine biosynthesis; carbamoyl phosphate from bicarbonate: step 1/1. Its pathway is pyrimidine metabolism; UMP biosynthesis via de novo pathway; (S)-dihydroorotate from bicarbonate: step 1/3. In terms of biological role, large subunit of the glutamine-dependent carbamoyl phosphate synthetase (CPSase). CPSase catalyzes the formation of carbamoyl phosphate from the ammonia moiety of glutamine, carbonate, and phosphate donated by ATP, constituting the first step of 2 biosynthetic pathways, one leading to arginine and/or urea and the other to pyrimidine nucleotides. The large subunit (synthetase) binds the substrates ammonia (free or transferred from glutamine from the small subunit), hydrogencarbonate and ATP and carries out an ATP-coupled ligase reaction, activating hydrogencarbonate by forming carboxy phosphate which reacts with ammonia to form carbamoyl phosphate. This Bacillus cereus (strain ATCC 14579 / DSM 31 / CCUG 7414 / JCM 2152 / NBRC 15305 / NCIMB 9373 / NCTC 2599 / NRRL B-3711) protein is Carbamoyl phosphate synthase large chain.